A 339-amino-acid polypeptide reads, in one-letter code: DNA-directed RNA polymerase subunit alpha (339 aa).

The interval 1–233 (MVREEITGST…DLFLPFIHTE (233 aa)) is alpha N-terminal domain (alpha-NTD). An alpha C-terminal domain (alpha-CTD) region spans residues 266-339 (GIPLNCIFID…IDLPKNKFSL (74 aa)).

This sequence belongs to the RNA polymerase alpha chain family. In plastids the minimal PEP RNA polymerase catalytic core is composed of four subunits: alpha, beta, beta', and beta''. When a (nuclear-encoded) sigma factor is associated with the core the holoenzyme is formed, which can initiate transcription.

Its subcellular location is the plastid. It is found in the chloroplast. It carries out the reaction RNA(n) + a ribonucleoside 5'-triphosphate = RNA(n+1) + diphosphate. In terms of biological role, DNA-dependent RNA polymerase catalyzes the transcription of DNA into RNA using the four ribonucleoside triphosphates as substrates. In Sorghum bicolor (Sorghum), this protein is DNA-directed RNA polymerase subunit alpha.